A 201-amino-acid polypeptide reads, in one-letter code: Probable chemoreceptor glutamine deamidase CheD 2 (201 aa).

The protein belongs to the CheD family.

It carries out the reaction L-glutaminyl-[protein] + H2O = L-glutamyl-[protein] + NH4(+). In terms of biological role, probably deamidates glutamine residues to glutamate on methyl-accepting chemotaxis receptors (MCPs), playing an important role in chemotaxis. This is Probable chemoreceptor glutamine deamidase CheD 2 from Chromobacterium violaceum (strain ATCC 12472 / DSM 30191 / JCM 1249 / CCUG 213 / NBRC 12614 / NCIMB 9131 / NCTC 9757 / MK).